The following is a 198-amino-acid chain: NAD(P)H quinone oxidoreductase PST1 (198 aa).

The Flavodoxin-like domain occupies 6–192; that stretch reads VAIIIYSLYH…AIAKQQGEDF (187 aa). FMN-binding positions include 12-16 and 112-164; these read SLYHH and VFVW…SPWG.

Belongs to the WrbA family. FMN is required as a cofactor.

The protein localises to the cell membrane. The enzyme catalyses a quinone + NADH + H(+) = a quinol + NAD(+). It carries out the reaction a quinone + NADPH + H(+) = a quinol + NADP(+). Functionally, flavodoxin-like protein (FLP) that plays a role in cell wall integrity, oxidative stress protection and virulence. FLPs act as NAD(P)H quinone oxidoreductases. Reduces ubiquinone (coenzyme Q), enabling it to serve as an antioxidant in the membrane. The protein is NAD(P)H quinone oxidoreductase PST1 of Candida albicans (strain SC5314 / ATCC MYA-2876) (Yeast).